A 321-amino-acid polypeptide reads, in one-letter code: Mitochondrial thiamine pyrophosphate carrier 1 (321 aa).

The next 6 membrane-spanning stretches (helical) occupy residues 12–28 (GTRRQVVLAGGIAGLVS), 91–107 (LMYVCYGVIQFSAYRTT), 126–146 (FVAGATAGGLATASTYPLDLL), 184–200 (AAVGQIVPYMGLFFATY), 221–237 (AAGVIASVSSKTVMFPL), and 284–301 (GLTVSLFKAAPASAVTMW). Solcar repeat units lie at residues 12–110 (GTRR…TTQA), 120–206 (PPSA…LRPP), and 214–309 (PFGS…SLRL).

It belongs to the mitochondrial carrier (TC 2.A.29) family.

It is found in the mitochondrion inner membrane. Its function is as follows. Mitochondrial transporter that mediates uptake of thiamine pyrophosphate (ThPP) into mitochondria. This Aspergillus niger (strain ATCC MYA-4892 / CBS 513.88 / FGSC A1513) protein is Mitochondrial thiamine pyrophosphate carrier 1 (tpc1).